An 889-amino-acid polypeptide reads, in one-letter code: DNA mismatch repair protein MutS (889 aa).

641–648 (GPNMAGKS) lines the ATP pocket.

This sequence belongs to the DNA mismatch repair MutS family.

This protein is involved in the repair of mismatches in DNA. It is possible that it carries out the mismatch recognition step. This protein has a weak ATPase activity. In Orientia tsutsugamushi (strain Boryong) (Rickettsia tsutsugamushi), this protein is DNA mismatch repair protein MutS.